The following is a 343-amino-acid chain: Heat-inducible transcription repressor HrcA (343 aa).

This sequence belongs to the HrcA family.

In terms of biological role, negative regulator of class I heat shock genes (grpE-dnaK-dnaJ and groELS operons). Prevents heat-shock induction of these operons. The protein is Heat-inducible transcription repressor HrcA of Clostridium botulinum (strain Alaska E43 / Type E3).